A 440-amino-acid polypeptide reads, in one-letter code: Glycerophosphocholine cholinephosphodiesterase ENPP6 (440 aa).

The first 22 residues, Met-1–Ala-22, serve as a signal peptide directing secretion. Asp-32, Ser-71, and Asn-92 together coordinate substrate. Zn(2+)-binding residues include Asp-32 and Ser-71. The active-site Nucleophile is Ser-71. Ser-71 is modified (phosphoserine). Asn-100 and Asn-118 each carry an N-linked (GlcNAc...) asparagine glycan. A disulfide bond links Cys-142 and Cys-154. Position 193 (Asp-193) interacts with substrate. Zn(2+) is bound by residues Asp-193, His-197, Asp-240, and His-241. Substrate is bound at residue His-241. An N-linked (GlcNAc...) asparagine glycan is attached at Asn-341. Residue His-354 coordinates substrate. His-354 contacts Zn(2+). N-linked (GlcNAc...) asparagine glycosylation is present at Asn-404. Ala-418 carries the GPI-anchor amidated alanine lipid modification. The propeptide at Gly-419 to Ala-440 is removed in mature form.

It belongs to the nucleotide pyrophosphatase/phosphodiesterase family. As to quaternary structure, homodimer; disulfide-linked. Homotetramer. Zn(2+) is required as a cofactor.

Its subcellular location is the cell membrane. The catalysed reaction is sn-glycerol 3-phosphocholine + H2O = phosphocholine + glycerol + H(+). It carries out the reaction a 1-acyl-sn-glycero-3-phosphocholine + H2O = a 1-acyl-sn-glycerol + phosphocholine + H(+). The enzyme catalyses a 1-O-alkyl-sn-glycero-3-phosphocholine + H2O = a 1-O-alkyl-sn-glycerol + phosphocholine + H(+). It catalyses the reaction 1-dodecanoyl-sn-glycero-3-phosphocholine + H2O = 1-dodecanoyl-sn-glycerol + phosphocholine + H(+). The catalysed reaction is 1-hexadecanoyl-sn-glycero-3-phosphocholine + H2O = 1-hexadecanoyl-sn-glycerol + phosphocholine + H(+). It carries out the reaction 1-(5Z,8Z,11Z,14Z-eicosatetraenoyl)-sn-glycero-3-phosphocholine + H2O = 1-(5Z,8Z,11Z,14Z-eicosatetraenoyl)-sn-glycerol + phosphocholine + H(+). The enzyme catalyses 1-tetradecanoyl-sn-glycero-3-phosphocholine + H2O = 1-tetradecanoyl-sn-glycerol + phosphocholine + H(+). It catalyses the reaction sphing-4-enine-phosphocholine + H2O = sphing-4-enine + phosphocholine + H(+). The catalysed reaction is 1-(9Z-octadecenoyl)-sn-glycero-3-phosphocholine + H2O = 1-(9Z-octadecenoyl)-sn-glycerol + phosphocholine + H(+). It carries out the reaction 1-(9Z,12Z)-octadecadienoyl-sn-glycero-3-phosphocholine + H2O = 1-(9Z,12Z-octadecadienoyl)-sn-glycerol + phosphocholine + H(+). The enzyme catalyses glycero-2-phosphocholine + H2O = phosphocholine + glycerol + H(+). With respect to regulation, inhibited by EDTA and EGTA in vitro. Functionally, choline-specific glycerophosphodiesterase that hydrolyzes glycerophosphocholine (GPC) and lysophosphatidylcholine (LPC) and contributes to supplying choline to the cells. Has a preference for LPC with short (12:0 and 14:0) or polyunsaturated (18:2 and 20:4) fatty acids. In vitro, hydrolyzes only choline-containing lysophospholipids, such as sphingosylphosphorylcholine (SPC), platelet-activating factor (PAF) and lysoPAF, but not other lysophospholipids. The chain is Glycerophosphocholine cholinephosphodiesterase ENPP6 from Pongo abelii (Sumatran orangutan).